Here is a 732-residue protein sequence, read N- to C-terminus: Small conductance calcium-activated potassium channel protein 3 (732 aa).

Basic and acidic residues predominate over residues 1 to 11; the sequence is MDTSGHFHDSG. Disordered regions lie at residues 1–82 and 103–162; these read MDTS…QQAP and HSSP…ASPL. Over residues 35-59 the composition is skewed to pro residues; it reads QPPPPSAPPAVPQQPPGPLLQPQPP. Over residues 60–82 the composition is skewed to low complexity; sequence QLQQQQQQQQQQQQQQQQQQQAP. The span at 113–133 shows a compositional bias: polar residues; that stretch reads NSANSTAILHPSSRQGSQLNL. Positions 139–148 are enriched in low complexity; sequence GHSPSSTATS. S168 carries the post-translational modification Phosphoserine. Positions 241–257 are enriched in polar residues; sequence THNHQHAGTTAGSTTFP. Positions 241 to 260 are disordered; that stretch reads THNHQHAGTTAGSTTFPKAN. Residues 289 to 309 traverse the membrane as a helical segment; sequence LIFGMFGIVVMVIETELSWGL. The chain crosses the membrane as a helical span at residues 316–336; that stretch reads FSLALKCLISLSTIILLGLII. The chain crosses the membrane as a helical span at residues 367-387; that stretch reads ISLEMLVCAIHPIPGEYKFFW. A helical membrane pass occupies residues 406–426; that stretch reads IILSIPMFLRLYLIARVMLLH. Residues 455-475 traverse the membrane as a helical segment; it reads LMTICPGTVLLVFSISLWIIA. Positions 495 to 515 form an intramembrane region, pore-forming; it reads FLGAMWLISITFLSIGYGDMV. Residues 524 to 544 form a helical membrane-spanning segment; sequence VCLLTGIMGAGCTALVVAVVA. The tract at residues 562–638 is calmodulin-binding; it reads DTQLTKRIKN…LVDLSKMQNV (77 aa). A coiled-coil region spans residues 643–670; it reads ITELNDRSEDLEKQIGSLESKLEHLTAS. The tract at residues 704 to 732 is disordered; sequence GTSHAPPSDSPIGISSTSFPTPYTSSSSC. The segment covering 718 to 732 has biased composition (low complexity); that stretch reads SSTSFPTPYTSSSSC.

Belongs to the potassium channel KCNN family. KCa2.3/KCNN3 subfamily. Homodimer. Heteromultimer with KCNN2 or KCNN1; this modulates plasma membrane expression and consequently the small conductance calcium-activated potassium channel activity. The complex is composed of 4 channel subunits each of which binds to a calmodulin subunit which regulates the channel activity through calcium-binding. Interacts with CALM1.

It is found in the cell membrane. The protein localises to the cytoplasm. Its subcellular location is the myofibril. It localises to the sarcomere. The protein resides in the z line. It carries out the reaction K(+)(in) = K(+)(out). With respect to regulation, inhibited by bee venom neurotoxin apamin. Small conductance calcium-activated potassium channel that mediates the voltage-independent transmembrane transfer of potassium across the cell membrane through a constitutive interaction with calmodulin which binds the intracellular calcium allowing its opening. The current is characterized by a voltage-independent activation, an intracellular calcium concentration increase-dependent activation and a single-channel conductance of 10 picosiemens. Also presents an inwardly rectifying current, thus reducing its already small outward conductance of potassium ions, which is particularly the case when the membrane potential displays positive values, above + 20 mV. Activation is followed by membrane hyperpolarization. Thought to regulate neuronal excitability by contributing to the slow component of synaptic afterhyperpolarization. The protein is Small conductance calcium-activated potassium channel protein 3 of Rattus norvegicus (Rat).